Reading from the N-terminus, the 190-residue chain is GTP cyclohydrolase 1 1 (190 aa).

It belongs to the GTP cyclohydrolase I family. Homomer.

It catalyses the reaction GTP + H2O = 7,8-dihydroneopterin 3'-triphosphate + formate + H(+). Its pathway is cofactor biosynthesis; 7,8-dihydroneopterin triphosphate biosynthesis; 7,8-dihydroneopterin triphosphate from GTP: step 1/1. This chain is GTP cyclohydrolase 1 1, found in Pseudomonas putida (strain ATCC 47054 / DSM 6125 / CFBP 8728 / NCIMB 11950 / KT2440).